Consider the following 290-residue polypeptide: Pyridoxal kinase PdxY (290 aa).

Substrate contacts are provided by residues S12 and 47–48 (TQ). Residues D114, E151, K184, and 211-214 (RPLL) contribute to the ATP site. D225 serves as a coordination point for substrate.

The protein belongs to the pyridoxine kinase family. PdxY subfamily. As to quaternary structure, homodimer. Mg(2+) serves as cofactor.

The catalysed reaction is pyridoxal + ATP = pyridoxal 5'-phosphate + ADP + H(+). It functions in the pathway cofactor metabolism; pyridoxal 5'-phosphate salvage; pyridoxal 5'-phosphate from pyridoxal: step 1/1. Its function is as follows. Pyridoxal kinase involved in the salvage pathway of pyridoxal 5'-phosphate (PLP). Catalyzes the phosphorylation of pyridoxal to PLP. The sequence is that of Pyridoxal kinase PdxY from Pseudomonas fluorescens (strain Pf0-1).